The sequence spans 214 residues: MILAEGVQKFSLFFLEGAVLVGALGVVLLPNILYSAFLLGGVLMSIAGIYLLLNADFVAAAQVLIYVGAINVLILFAIMLVNKNDGRVAAGTSNSSGVTNNIIGLTCIGLAGFLIDMIVTTPWLPKGVAVATSLSAKADSTAAQTQLKGSISIIGLHIFSDFLLPFEVISLLLLVTLVGAIVIARRERLSDLEISKISLLNLPDPSNGKTPSLK.

5 helical membrane-spanning segments follow: residues 10–30, 32–52, 61–81, 102–122, and 163–183; these read FSLF…VLLP, ILYS…IYLL, AQVL…IMLV, IIGL…VTTP, and LLPF…AIVI.

Belongs to the complex I subunit 6 family. As to quaternary structure, NDH is composed of at least 16 different subunits, 5 of which are encoded in the nucleus.

It is found in the plastid. The protein localises to the chloroplast thylakoid membrane. It catalyses the reaction a plastoquinone + NADH + (n+1) H(+)(in) = a plastoquinol + NAD(+) + n H(+)(out). The catalysed reaction is a plastoquinone + NADPH + (n+1) H(+)(in) = a plastoquinol + NADP(+) + n H(+)(out). In terms of biological role, NDH shuttles electrons from NAD(P)H:plastoquinone, via FMN and iron-sulfur (Fe-S) centers, to quinones in the photosynthetic chain and possibly in a chloroplast respiratory chain. The immediate electron acceptor for the enzyme in this species is believed to be plastoquinone. Couples the redox reaction to proton translocation, and thus conserves the redox energy in a proton gradient. This is NAD(P)H-quinone oxidoreductase subunit 6, chloroplastic (ndhG) from Chlorokybus atmophyticus (Soil alga).